Reading from the N-terminus, the 115-residue chain is Histidine-rich carboxyl terminus protein 1 (115 aa).

Residues Ala-9–Ala-29 traverse the membrane as a helical segment. The segment at Gly-86–Arg-115 is disordered. Basic residues predominate over residues Leu-87–Arg-115.

It is found in the membrane. This chain is Histidine-rich carboxyl terminus protein 1 (HRCT1), found in Homo sapiens (Human).